A 51-amino-acid chain; its full sequence is ATP synthase subunit epsilon-like protein, mitochondrial (51 aa).

Position 21 is an N6-acetyllysine (Lys21).

It belongs to the eukaryotic ATPase epsilon family. F-type ATPases have 2 components, CF(1) - the catalytic core - and CF(0) - the membrane proton channel. CF(1) has five subunits: alpha(3), beta(3), gamma(1), delta(1), epsilon(1). CF(0) seems to have nine subunits: a, b, c, d, e, f, g, F6 and 8 (or A6L).

The protein resides in the mitochondrion inner membrane. In terms of biological role, mitochondrial membrane ATP synthase (F(1)F(0) ATP synthase or Complex V) produces ATP from ADP in the presence of a proton gradient across the membrane which is generated by electron transport complexes of the respiratory chain. F-type ATPases consist of two structural domains, F(1) - containing the extramembraneous catalytic core, and F(0) - containing the membrane proton channel, linked together by a central stalk and a peripheral stalk. During catalysis, ATP synthesis in the catalytic domain of F(1) is coupled via a rotary mechanism of the central stalk subunits to proton translocation. Part of the complex F(1) domain and of the central stalk which is part of the complex rotary element. Rotation of the central stalk against the surrounding alpha(3)beta(3) subunits leads to hydrolysis of ATP in three separate catalytic sites on the beta subunits. This is ATP synthase subunit epsilon-like protein, mitochondrial from Homo sapiens (Human).